Reading from the N-terminus, the 138-residue chain is Basic phospholipase A2 sistruxin B (138 aa).

The signal sequence occupies residues 1–16; the sequence is MRALWIVAVLLVGVEG. Disulfide bonds link Cys-42/Cys-131, Cys-44/Cys-60, Cys-59/Cys-111, Cys-65/Cys-138, Cys-66/Cys-104, Cys-73/Cys-97, and Cys-91/Cys-102. Residues Tyr-43, Gly-45, and Gly-47 each contribute to the Ca(2+) site. His-63 is an active-site residue. Asp-64 is a binding site for Ca(2+). The active site involves Asp-105.

In terms of assembly, heterodimer of an acidic subunit and a basic chain. The acidic subunit is non-toxic, without enzymatic activity and comprises 3 peptides that are cross-linked by 7 disulfide bridges. The basic subunit is toxic, has phospholipase A2 activity and is composed of a single chain. Ca(2+) serves as cofactor. In terms of tissue distribution, expressed by the venom gland.

Its subcellular location is the secreted. The catalysed reaction is a 1,2-diacyl-sn-glycero-3-phosphocholine + H2O = a 1-acyl-sn-glycero-3-phosphocholine + a fatty acid + H(+). Snake venom phospholipase A2 (PLA2) that shows presynaptic neurotoxicity. PLA2 catalyzes the calcium-dependent hydrolysis of the 2-acyl groups in 3-sn-phosphoglycerides. The chain is Basic phospholipase A2 sistruxin B from Sistrurus tergeminus (Western massasauga).